A 232-amino-acid polypeptide reads, in one-letter code: Ion-translocating oxidoreductase complex subunit E (232 aa).

6 helical membrane passes run 18–38 (GLVQ…LTNA), 39–59 (LGLG…VSLV), 69–89 (IPVF…VINA), 93–113 (GLYL…VIIG), 128–148 (AFDG…LGAV), and 182–202 (SFLL…LIAG).

This sequence belongs to the NqrDE/RnfAE family. In terms of assembly, the complex is composed of six subunits: RnfA, RnfB, RnfC, RnfD, RnfE and RnfG.

It localises to the cell inner membrane. Part of a membrane-bound complex that couples electron transfer with translocation of ions across the membrane. The protein is Ion-translocating oxidoreductase complex subunit E of Shewanella amazonensis (strain ATCC BAA-1098 / SB2B).